The following is a 166-amino-acid chain: Nucleotide-binding protein SUN_0226 (166 aa).

It belongs to the YajQ family.

Functionally, nucleotide-binding protein. This chain is Nucleotide-binding protein SUN_0226, found in Sulfurovum sp. (strain NBC37-1).